The chain runs to 408 residues: Succinylornithine transaminase (408 aa).

Lys252 is subject to N6-(pyridoxal phosphate)lysine.

It belongs to the class-III pyridoxal-phosphate-dependent aminotransferase family. AstC subfamily. It depends on pyridoxal 5'-phosphate as a cofactor.

It catalyses the reaction N(2)-succinyl-L-ornithine + 2-oxoglutarate = N-succinyl-L-glutamate 5-semialdehyde + L-glutamate. It participates in amino-acid degradation; L-arginine degradation via AST pathway; L-glutamate and succinate from L-arginine: step 3/5. Functionally, catalyzes the transamination of N(2)-succinylornithine and alpha-ketoglutarate into N(2)-succinylglutamate semialdehyde and glutamate. Can also act as an acetylornithine aminotransferase. The polypeptide is Succinylornithine transaminase (Salmonella paratyphi B (strain ATCC BAA-1250 / SPB7)).